The following is a 1014-amino-acid chain: Probable LRR receptor-like serine/threonine-protein kinase At1g07650 (1014 aa).

A signal peptide spans 1–23; it reads MIYLHRIYFIIVLFTLIFHGRLG. At 24-619 the chain is on the extracellular side; the sequence is FSDNNKLHEA…KPPVYYDTKD (596 aa). N-linked (GlcNAc...) asparagine glycans are attached at residues Asn76, Asn87, and Asn101. LRR repeat units follow at residues 89–112, 113–137, 139–160, 161–184, 186–207, 208–234, 256–279, 280–304, 305–327, 329–352, and 354–376; these read SCHV…EFSK, LRHL…WASM, LEDL…LTRL, TMLR…IGQL, HLEK…KLGL, LKNL…NWTR, LTSL…PLKN, LESI…IGDL, KKLK…SFEN, KKAD…FVER, and KNVD…DCNR. Asn165 is a glycosylation site (N-linked (GlcNAc...) asparagine). Residues Asn210, Asn220, and Asn231 are each glycosylated (N-linked (GlcNAc...) asparagine). 5 N-linked (GlcNAc...) asparagine glycosylation sites follow: Asn362, Asn389, Asn474, Asn481, and Asn511. One copy of the LRR 12 repeat lies at 516–539; the sequence is LHFAEIIFTDDNTLYSLGKRLFDI. Asn570 carries N-linked (GlcNAc...) asparagine glycosylation. The chain crosses the membrane as a helical span at residues 620-640; it reads IILKVGVPVAAATLLLFIIVG. The Cytoplasmic segment spans residues 641-1014; it reads VFWKKRRDKN…DAEEKTGLLD (374 aa). A Phosphothreonine modification is found at Thr667. In terms of domain architecture, Protein kinase spans 678–960; the sequence is FDVTRKIGEG…EGKTAMQELL (283 aa). Residues 684–692 and Lys706 each bind ATP; that span reads IGEGGFGSV. Tyr751 carries the post-translational modification Phosphotyrosine. Residue Asp805 is the Proton acceptor of the active site. 2 positions are modified to phosphoserine: Ser809 and Ser838. 2 positions are modified to phosphothreonine: Thr839 and Thr844. Tyr852 carries the post-translational modification Phosphotyrosine. Ser989 carries the phosphoserine modification. Positions 989–1002 are enriched in polar residues; the sequence is SFSTSGPRTASANS. Positions 989 to 1014 are disordered; it reads SFSTSGPRTASANSLVDAEEKTGLLD.

This sequence belongs to the protein kinase superfamily. Ser/Thr protein kinase family.

Its subcellular location is the membrane. The catalysed reaction is L-seryl-[protein] + ATP = O-phospho-L-seryl-[protein] + ADP + H(+). It carries out the reaction L-threonyl-[protein] + ATP = O-phospho-L-threonyl-[protein] + ADP + H(+). The chain is Probable LRR receptor-like serine/threonine-protein kinase At1g07650 from Arabidopsis thaliana (Mouse-ear cress).